A 185-amino-acid polypeptide reads, in one-letter code: Photosystem I assembly protein Ycf4 (185 aa).

A run of 2 helical transmembrane segments spans residues 20–40 (GNFFWACILFLGSLGFLSVGA) and 57–77 (ILFFPQGVVMSFYGIAGLFIS).

This sequence belongs to the Ycf4 family.

Its subcellular location is the plastid. It is found in the chloroplast thylakoid membrane. Its function is as follows. Seems to be required for the assembly of the photosystem I complex. In Lolium perenne (Perennial ryegrass), this protein is Photosystem I assembly protein Ycf4.